The sequence spans 363 residues: Isopentenyl-diphosphate delta-isomerase (363 aa).

6 to 7 (RK) is a binding site for substrate. Residues 64–66 (AMT), serine 94, and asparagine 123 contribute to the FMN site. Glutamine 153 contributes to the substrate binding site. A Mg(2+)-binding site is contributed by glutamate 154. FMN-binding positions include lysine 185, serine 210, threonine 215, 259–261 (GVR), and 280–281 (SA).

This sequence belongs to the IPP isomerase type 2 family. In terms of assembly, homooctamer. Dimer of tetramers. The cofactor is Mg(2+). FMN is required as a cofactor. It depends on NADPH as a cofactor.

Its subcellular location is the cytoplasm. The enzyme catalyses isopentenyl diphosphate = dimethylallyl diphosphate. Functionally, involved in the biosynthesis of isoprenoids. Catalyzes the 1,3-allylic rearrangement of the homoallylic substrate isopentenyl (IPP) to its allylic isomer, dimethylallyl diphosphate (DMAPP). This Streptomyces sp. (strain CL190) protein is Isopentenyl-diphosphate delta-isomerase.